A 366-amino-acid chain; its full sequence is uncharacterized protein (366 aa).

6 helical membrane-spanning segments follow: residues 30–50 (FWTY…AVGI), 66–86 (IIIA…IIVI), 136–156 (IFIS…GYLA), 162–182 (IILF…LDLL), 198–218 (IGVV…IYDI), and 225–245 (YIPE…IIDV).

The protein resides in the cell membrane. This is an uncharacterized protein from Methanocaldococcus jannaschii (strain ATCC 43067 / DSM 2661 / JAL-1 / JCM 10045 / NBRC 100440) (Methanococcus jannaschii).